A 65-amino-acid polypeptide reads, in one-letter code: MDDILVTSDLTSRYKISRKTLWSWQSADTMPRGFVCPFPPPDWPGNPNRWRSESIKEWEDKKKIN.

Residues 45–65 are disordered; it reads GNPNRWRSESIKEWEDKKKIN. Basic and acidic residues predominate over residues 50 to 65; the sequence is WRSESIKEWEDKKKIN.

Its function is as follows. Excisionase and integrase are necessary for the excision of prophage from the host genome by site-specific recombination at the att site. This is Excisionase (xis) from Escherichia coli (Bacteriophage phi-80).